Consider the following 155-residue polypeptide: 17.3 kDa class II heat shock protein (155 aa).

Residues 39–155 (DAKAMAATPA…KPKTIEVKVA (117 aa)) enclose the sHSP domain.

This sequence belongs to the small heat shock protein (HSP20) family.

The protein resides in the cytoplasm. In Solanum peruvianum (Peruvian tomato), this protein is 17.3 kDa class II heat shock protein.